The primary structure comprises 122 residues: Large ribosomal subunit protein bL12 (122 aa).

It belongs to the bacterial ribosomal protein bL12 family. As to quaternary structure, homodimer. Part of the ribosomal stalk of the 50S ribosomal subunit. Forms a multimeric L10(L12)X complex, where L10 forms an elongated spine to which 2 to 4 L12 dimers bind in a sequential fashion. Binds GTP-bound translation factors.

Its function is as follows. Forms part of the ribosomal stalk which helps the ribosome interact with GTP-bound translation factors. Is thus essential for accurate translation. The polypeptide is Large ribosomal subunit protein bL12 (Glaesserella parasuis serovar 5 (strain SH0165) (Haemophilus parasuis)).